Reading from the N-terminus, the 193-residue chain is Peptidyl-tRNA hydrolase (193 aa).

Tyr-16 lines the tRNA pocket. His-21 serves as the catalytic Proton acceptor. Phe-67, Asn-69, and Asn-115 together coordinate tRNA.

It belongs to the PTH family. Monomer.

It localises to the cytoplasm. It catalyses the reaction an N-acyl-L-alpha-aminoacyl-tRNA + H2O = an N-acyl-L-amino acid + a tRNA + H(+). In terms of biological role, hydrolyzes ribosome-free peptidyl-tRNAs (with 1 or more amino acids incorporated), which drop off the ribosome during protein synthesis, or as a result of ribosome stalling. Catalyzes the release of premature peptidyl moieties from peptidyl-tRNA molecules trapped in stalled 50S ribosomal subunits, and thus maintains levels of free tRNAs and 50S ribosomes. The protein is Peptidyl-tRNA hydrolase of Psychrobacter cryohalolentis (strain ATCC BAA-1226 / DSM 17306 / VKM B-2378 / K5).